The primary structure comprises 92 residues: 10 kDa late embryogenesis abundant protein (92 aa).

Over residues 1-10 (MASQQGQQTR) the composition is skewed to polar residues. Positions 1–92 (MASQQGQQTR…GEREEEEEED (92 aa)) are disordered. Composition is skewed to basic and acidic residues over residues 11-26 (KIPE…RAAK) and 38-71 (KSLE…EMGK).

This sequence belongs to the small hydrophilic plant seed protein family. In terms of tissue distribution, maximally expressed in dry seeds. Also present in mid-maturation embryos.

Its function is as follows. LEA proteins are late embryonic proteins abundant in higher plant seed embryos. They may play an essential role in seed survival and in controlling water exchanges during seed desiccation and imbibition. The sequence is that of 10 kDa late embryogenesis abundant protein from Helianthus annuus (Common sunflower).